The sequence spans 262 residues: Shikimate dehydrogenase (NADP(+)) (262 aa).

Residues 15 to 17 (SRS) and threonine 62 each bind shikimate. Catalysis depends on lysine 66, which acts as the Proton acceptor. NADP(+) is bound at residue glutamate 78. 2 residues coordinate shikimate: asparagine 87 and aspartate 102. NADP(+)-binding positions include 126 to 130 (GAGGA), 150 to 155 (NRTQQR), and methionine 214. Tyrosine 216 is a binding site for shikimate. Glycine 236 provides a ligand contact to NADP(+).

The protein belongs to the shikimate dehydrogenase family. Homodimer.

The catalysed reaction is shikimate + NADP(+) = 3-dehydroshikimate + NADPH + H(+). It participates in metabolic intermediate biosynthesis; chorismate biosynthesis; chorismate from D-erythrose 4-phosphate and phosphoenolpyruvate: step 4/7. Its function is as follows. Involved in the biosynthesis of the chorismate, which leads to the biosynthesis of aromatic amino acids. Catalyzes the reversible NADPH linked reduction of 3-dehydroshikimate (DHSA) to yield shikimate (SA). The sequence is that of Shikimate dehydrogenase (NADP(+)) from Acinetobacter baylyi (strain ATCC 33305 / BD413 / ADP1).